We begin with the raw amino-acid sequence, 81 residues long: Cytotoxin 1d/1e (81 aa).

The first 21 residues, 1-21 (MKTLLLTLVVVTIVCLDLGYT), serve as a signal peptide directing secretion. 4 disulfide bridges follow: Cys24/Cys42, Cys35/Cys59, Cys63/Cys74, and Cys75/Cys80.

The protein belongs to the three-finger toxin family. Short-chain subfamily. Type IA cytotoxin sub-subfamily. Monomer in solution; Homodimer and oligomer in the presence of negatively charged lipids forming a pore with a size ranging between 20 and 30 Angstroms. Expressed by the venom gland.

The protein localises to the secreted. It localises to the target cell membrane. Functionally, shows cytolytic activity on many different cells by forming pore in lipid membranes. In vivo, increases heart rate or kills the animal by cardiac arrest. In addition, it binds to heparin with high affinity, interacts with Kv channel-interacting protein 1 (KCNIP1) in a calcium-independent manner, and binds to integrin alpha-V/beta-3 (ITGAV/ITGB3) with moderate affinity. The polypeptide is Cytotoxin 1d/1e (Naja atra (Chinese cobra)).